Consider the following 178-residue polypeptide: Ribosome maturation factor RimM (178 aa).

The region spanning 101 to 178 is the PRC barrel domain; that stretch reads EGEFYWYQLQ…EMRVDWDADF (78 aa).

This sequence belongs to the RimM family. As to quaternary structure, binds ribosomal protein uS19.

The protein resides in the cytoplasm. Its function is as follows. An accessory protein needed during the final step in the assembly of 30S ribosomal subunit, possibly for assembly of the head region. Essential for efficient processing of 16S rRNA. May be needed both before and after RbfA during the maturation of 16S rRNA. It has affinity for free ribosomal 30S subunits but not for 70S ribosomes. This chain is Ribosome maturation factor RimM, found in Ectopseudomonas mendocina (strain ymp) (Pseudomonas mendocina).